Consider the following 102-residue polypeptide: Large ribosomal subunit protein uL24 (102 aa).

Belongs to the universal ribosomal protein uL24 family. As to quaternary structure, part of the 50S ribosomal subunit.

Its function is as follows. One of two assembly initiator proteins, it binds directly to the 5'-end of the 23S rRNA, where it nucleates assembly of the 50S subunit. In terms of biological role, one of the proteins that surrounds the polypeptide exit tunnel on the outside of the subunit. This Paraburkholderia phytofirmans (strain DSM 17436 / LMG 22146 / PsJN) (Burkholderia phytofirmans) protein is Large ribosomal subunit protein uL24.